The chain runs to 658 residues: Structure-specific endonuclease subunit SLX1 (658 aa).

Positions 12 to 92 (PFYACYFLRS…AKPHLSRHLK (81 aa)) constitute a GIY-YIG domain. 4 disordered regions span residues 29 to 52 (YIGS…QGAY), 239 to 269 (GVAE…ETLP), 288 to 328 (PIPQ…NGVD), and 594 to 658 (TTSR…IDLT). Basic and acidic residues-rich tracts occupy residues 308–324 (KLSD…HDAE) and 627–640 (SKID…DTKK). Residues 641-652 (NTTQKAKSNETS) are compositionally biased toward polar residues.

The protein belongs to the SLX1 family. In terms of assembly, forms a heterodimer with SLX4. The cofactor is a divalent metal cation.

It is found in the nucleus. Its function is as follows. Catalytic subunit of the SLX1-SLX4 structure-specific endonuclease that resolves DNA secondary structures generated during DNA repair and recombination. Has endonuclease activity towards branched DNA substrates, introducing single-strand cuts in duplex DNA close to junctions with ss-DNA. The protein is Structure-specific endonuclease subunit SLX1 of Mycosarcoma maydis (Corn smut fungus).